Here is a 592-residue protein sequence, read N- to C-terminus: Beta-xylosidase (592 aa).

An N-terminal signal peptide occupies residues 1–19; it reads MYLNACRALTLISVLSLLA. A lipid anchor (N-palmitoyl cysteine) is attached at Cys20. Cys20 is lipidated: S-diacylglycerol cysteine.

This sequence belongs to the glycosyl hydrolase 43 family.

The protein resides in the cell outer membrane. In terms of biological role, xylosidase involved in ulvan degradation. Ulvan is the main polysaccharide component of the Ulvales (green seaweed) cell wall. It is composed of disaccharide building blocks comprising 3-sulfated rhamnose (Rha3S) linked to D-glucuronic acid (GlcA), L-iduronic acid (IduA), or D-xylose (Xyl). Beta-xylosidase converts Xyl-Rha3S, a product of alpha-L-rhamnosidase acting on Rha-Xyl-Rha3S oligosaccharides, further to Xyl and Rha3S. The polypeptide is Beta-xylosidase (Formosa agariphila (strain DSM 15362 / KCTC 12365 / LMG 23005 / KMM 3901 / M-2Alg 35-1)).